The following is a 156-amino-acid chain: 6,7-dimethyl-8-ribityllumazine synthase (156 aa).

5-amino-6-(D-ribitylamino)uracil-binding positions include Phe-25, 59–61 (AWE), and 83–85 (AVI). 88–89 (ST) lines the (2S)-2-hydroxy-3-oxobutyl phosphate pocket. His-91 (proton donor) is an active-site residue. 5-amino-6-(D-ribitylamino)uracil is bound at residue Asn-116. Arg-130 provides a ligand contact to (2S)-2-hydroxy-3-oxobutyl phosphate.

The protein belongs to the DMRL synthase family. Forms an icosahedral capsid composed of 60 subunits, arranged as a dodecamer of pentamers.

It catalyses the reaction (2S)-2-hydroxy-3-oxobutyl phosphate + 5-amino-6-(D-ribitylamino)uracil = 6,7-dimethyl-8-(1-D-ribityl)lumazine + phosphate + 2 H2O + H(+). It participates in cofactor biosynthesis; riboflavin biosynthesis; riboflavin from 2-hydroxy-3-oxobutyl phosphate and 5-amino-6-(D-ribitylamino)uracil: step 1/2. Functionally, catalyzes the formation of 6,7-dimethyl-8-ribityllumazine by condensation of 5-amino-6-(D-ribitylamino)uracil with 3,4-dihydroxy-2-butanone 4-phosphate. This is the penultimate step in the biosynthesis of riboflavin. The polypeptide is 6,7-dimethyl-8-ribityllumazine synthase (Acinetobacter baylyi (strain ATCC 33305 / BD413 / ADP1)).